The sequence spans 405 residues: Argininosuccinate synthase (405 aa).

ATP contacts are provided by residues 11–19 and Ala-38; that span reads AYSGGLDTS. L-citrulline is bound by residues Tyr-91 and Ser-96. Gly-121 contacts ATP. The L-aspartate site is built by Thr-123, Asn-127, and Asp-128. Residue Asn-127 coordinates L-citrulline. L-citrulline is bound by residues Arg-131, Ser-181, Ser-190, Glu-266, and Tyr-278.

The protein belongs to the argininosuccinate synthase family. Type 1 subfamily. As to quaternary structure, homotetramer.

Its subcellular location is the cytoplasm. It carries out the reaction L-citrulline + L-aspartate + ATP = 2-(N(omega)-L-arginino)succinate + AMP + diphosphate + H(+). Its pathway is amino-acid biosynthesis; L-arginine biosynthesis; L-arginine from L-ornithine and carbamoyl phosphate: step 2/3. The chain is Argininosuccinate synthase from Nitratiruptor sp. (strain SB155-2).